The chain runs to 133 residues: MSMSDTLADMLTRIRNAQRSRLMYVNAPSSRRKEAILDVLVKEGFIHSFLVHEVRNGVKEINIKLKYSPKGESNIKEINRVSTPGKRVYLSIKKLRPYYNNMGIYIISTSKGIMSDREARKLGVGGEVICKVF.

Belongs to the universal ribosomal protein uS8 family. Part of the 30S ribosomal subunit. Contacts proteins S5 and S12.

In terms of biological role, one of the primary rRNA binding proteins, it binds directly to 16S rRNA central domain where it helps coordinate assembly of the platform of the 30S subunit. In Orientia tsutsugamushi (strain Ikeda) (Rickettsia tsutsugamushi), this protein is Small ribosomal subunit protein uS8.